We begin with the raw amino-acid sequence, 254 residues long: Gamma-glutamyl-gamma-aminobutyrate hydrolase PuuD (254 aa).

Residues 16-250 (RNRLKGHATQ…ITACQHHIAE (235 aa)) enclose the Glutamine amidotransferase type-1 domain. Residue cysteine 114 is the Nucleophile of the active site. Active-site residues include histidine 222 and glutamate 224.

This sequence belongs to the peptidase C26 family. In terms of assembly, homodimer.

It catalyses the reaction 4-(gamma-L-glutamylamino)butanoate + H2O = 4-aminobutanoate + L-glutamate. It functions in the pathway amine and polyamine degradation; putrescine degradation; 4-aminobutanoate from putrescine: step 4/4. Involved in the breakdown of putrescine via hydrolysis of the gamma-glutamyl linkage of gamma-glutamyl-gamma-aminobutyrate. The sequence is that of Gamma-glutamyl-gamma-aminobutyrate hydrolase PuuD (puuD) from Escherichia coli (strain K12).